A 798-amino-acid chain; its full sequence is Protocadherin beta-10 (798 aa).

The N-terminal stretch at 1–26 (MAVRELCFSRQRQVLFLFLFWGVSLA) is a signal peptide. The Extracellular portion of the chain corresponds to 27–690 (GSGFGRYSVT…AQADLLTVYL (664 aa)). 5 Cadherin domains span residues 35-133 (VTEE…APVF), 138-242 (TVLK…APQF), 247-347 (YETQ…PPEL), 352-451 (FSNS…APAF), and 456-561 (YTLF…SPFV). Asparagine 169 carries N-linked (GlcNAc...) asparagine glycosylation. N-linked (GlcNAc...) asparagine glycans are attached at residues asparagine 418 and asparagine 436. A glycan (N-linked (GlcNAc...) asparagine) is linked at asparagine 567. In terms of domain architecture, Cadherin 6 spans 568–671 (GSAPCTELVP…LVDGFSQPYL (104 aa)). A helical membrane pass occupies residues 691–711 (VVALASVSSLFLFSVLLFVAV). Topologically, residues 712–798 (RLCRRSRAAS…FRNSFGFNIQ (87 aa)) are cytoplasmic.

The protein resides in the cell membrane. Potential calcium-dependent cell-adhesion protein. May be involved in the establishment and maintenance of specific neuronal connections in the brain. The chain is Protocadherin beta-10 (PCDHB10) from Pan troglodytes (Chimpanzee).